The chain runs to 252 residues: MSGKGKVIIKLPKTVIPVKHVEPVLIDVDKLLPHEEIVPGRLKDLMEKIRSEGVVDMPIIVTPIPGIDKYLVVDGHHRWAAVKELGYKKVPAIIIDYFDENVKLKTWYPAIIGSINKLLEEIKKEGIRIEECKGKDDVLKDEELGKYAFVIIGKNNECYKIYGSINEQKIVSKILSKLNLEGEYTLVYYGEKDEALRDLEEGKIDYLFLRKPPTKNEVIEIAKRNQVYSPKTTRHILPYIPAITNTPLDKLK.

E35 is a catalytic residue. V73 is an O-phospho-L-serine binding site. D74 contacts Mg(2+). Residues G75, H76, H77, W107, K231, T233, and H235 each coordinate O-phospho-L-serine.

Belongs to the SerK family. In terms of assembly, monomer. It depends on Mg(2+) as a cofactor.

It catalyses the reaction L-serine + ATP = O-phospho-L-serine + ADP + H(+). In terms of biological role, free serine kinase that uses ATP to phosphorylate L-serine to yield O-phospho-L-serine and ADP. Can use ATP, UTP, CTP, GTP and the inorganic polyphosphates triphosphate and tetraphosphate as phosphate donors, with a preference for nucleoside 5'-triphosphates, but cannot use ADP. The catalytic efficiency is highest for ATP. Is specific for L-serine and cannot phosphorylate structurally similar compounds such as D-serine, L-threonine, L-homoserine, hydroxypyruvate, 3-hydroxypropionate and DL-glycerate. Likely contributes to serine metabolism, including cysteine biosynthesis. In Staphylothermus marinus (strain ATCC 43588 / DSM 3639 / JCM 9404 / F1), this protein is ATP-dependent L-serine kinase.